A 571-amino-acid polypeptide reads, in one-letter code: DNA primase (571 aa).

The CHC2-type zinc-finger motif lies at 20-44; the sequence is CPFHKEKTPSFQVDTEKGYYHCFGC. The 81-residue stretch at 229-309 folds into the Toprim domain; sequence AELVVVEGYM…KFRVRATSVP (81 aa). Mg(2+) is bound by residues E235, D280, and D282.

Belongs to the DnaG primase family. Monomer. Interacts with DnaB. The cofactor is Zn(2+). It depends on Mg(2+) as a cofactor.

The enzyme catalyses ssDNA + n NTP = ssDNA/pppN(pN)n-1 hybrid + (n-1) diphosphate.. In terms of biological role, RNA polymerase that catalyzes the synthesis of short RNA molecules used as primers for DNA polymerase during DNA replication. This Deinococcus radiodurans (strain ATCC 13939 / DSM 20539 / JCM 16871 / CCUG 27074 / LMG 4051 / NBRC 15346 / NCIMB 9279 / VKM B-1422 / R1) protein is DNA primase.